A 159-amino-acid chain; its full sequence is Ribosomal RNA large subunit methyltransferase H (159 aa).

2 residues coordinate S-adenosyl-L-methionine: Leu76 and Gly108.

Belongs to the RNA methyltransferase RlmH family. Homodimer.

It localises to the cytoplasm. It carries out the reaction pseudouridine(1915) in 23S rRNA + S-adenosyl-L-methionine = N(3)-methylpseudouridine(1915) in 23S rRNA + S-adenosyl-L-homocysteine + H(+). In terms of biological role, specifically methylates the pseudouridine at position 1915 (m3Psi1915) in 23S rRNA. The sequence is that of Ribosomal RNA large subunit methyltransferase H from Limosilactobacillus fermentum (strain NBRC 3956 / LMG 18251) (Lactobacillus fermentum).